Here is a 426-residue protein sequence, read N- to C-terminus: MEKIFKILANLKFAIALLLLISITITFGSIIEQDQTLDYYKQNYPLTNPIGGFLTWKVINMFQLNHIYKNFWFISLLLSLGISLIACTFFQQFPGIKFSRRCYFSNNPRKTDFQTQLKTNLSRNIIYTIISEGYFVFQQKKNFYGTKGIIGRIAPVFVHLSIILILLGSIFASLGGFNSQELIGKGEIFHIQNVTSSGPLTKLSQQAIRVNDFWINYYPNNKIKQFYSNLSIINGDGQEVRSKTISVNKPLIYKDLTFYQTDWNLLGLRISHNNKNFQIPVIQTTQNLNKVWLTWLPLESNTSKNLSGETIIINNYKGTIYIYDNNGQLNKKIELSNFIENKNYKLIEFLSVTGIQIKSDPGILFIYFGFGFLMVSTILSYLSFSQVWLGIDYLEQNNIKLTVNAKTNRTKVLLTTQMYKITKNKR.

Transmembrane regions (helical) follow at residues 11-31 (LKFA…GSII), 70-90 (NFWF…CTFF), and 153-173 (IAPV…IFAS).

It belongs to the Ccs1/CcsB family. In terms of assembly, may interact with CcsA.

Its subcellular location is the plastid. The protein resides in the chloroplast thylakoid membrane. Its function is as follows. Required during biogenesis of c-type cytochromes (cytochrome c6 and cytochrome f) at the step of heme attachment. This is Cytochrome c biogenesis protein Ccs1 from Heterosigma akashiwo (strain CCMP452 / OLISTH).